Consider the following 184-residue polypeptide: NADH-quinone oxidoreductase subunit B (184 aa).

The [4Fe-4S] cluster site is built by Cys-37, Cys-38, Cys-103, and Cys-132. The interval 164–184 (HEREEAAKHALPTHSMKGLLR) is disordered.

Belongs to the complex I 20 kDa subunit family. NDH-1 is composed of 14 different subunits. Subunits NuoB, C, D, E, F, and G constitute the peripheral sector of the complex. [4Fe-4S] cluster serves as cofactor.

The protein localises to the cell membrane. The catalysed reaction is a quinone + NADH + 5 H(+)(in) = a quinol + NAD(+) + 4 H(+)(out). In terms of biological role, NDH-1 shuttles electrons from NADH, via FMN and iron-sulfur (Fe-S) centers, to quinones in the respiratory chain. The immediate electron acceptor for the enzyme in this species is believed to be a menaquinone. Couples the redox reaction to proton translocation (for every two electrons transferred, four hydrogen ions are translocated across the cytoplasmic membrane), and thus conserves the redox energy in a proton gradient. The protein is NADH-quinone oxidoreductase subunit B of Acidothermus cellulolyticus (strain ATCC 43068 / DSM 8971 / 11B).